The primary structure comprises 202 residues: uncharacterized protein (202 aa).

The chain crosses the membrane as a helical span at residues 175–195 (INTGIALFIILTSLLVYFIQF).

It localises to the membrane. This is an uncharacterized protein from Dictyostelium discoideum (Social amoeba).